Reading from the N-terminus, the 384-residue chain is Fructose-1,6-bisphosphate aldolase/phosphatase (384 aa).

Residue aspartate 11 is the Proton acceptor; for FBP phosphatase activity of the active site. Mg(2+) contacts are provided by aspartate 11, histidine 18, aspartate 52, and aspartate 53. Histidine 18 lines the beta-D-fructose 1,6-bisphosphate pocket. Residue histidine 18 coordinates dihydroxyacetone phosphate. Tyrosine 90 lines the beta-D-fructose 1,6-bisphosphate pocket. Glutamine 94 serves as a coordination point for Mg(2+). 103–104 (GN) is a binding site for beta-D-fructose 1,6-bisphosphate. Position 131 (aspartate 131) interacts with Mg(2+). Residue lysine 132 coordinates beta-D-fructose 1,6-bisphosphate. Lysine 132 serves as a coordination point for dihydroxyacetone phosphate. The Proton donor/acceptor; for FBP aldolase activity role is filled by tyrosine 228. Residues lysine 231, aspartate 232, and aspartate 233 each coordinate Mg(2+). Lysine 231 functions as the Schiff-base intermediate with DHAP; for FBP aldolase activity in the catalytic mechanism. Beta-D-fructose 1,6-bisphosphate contacts are provided by residues 241 to 242 (QH), arginine 265, aspartate 286, and tyrosine 347. Positions 265 and 286 each coordinate dihydroxyacetone phosphate.

Belongs to the FBP aldolase/phosphatase family. As to quaternary structure, homooctamer; dimer of tetramers. The cofactor is Mg(2+).

It carries out the reaction beta-D-fructose 1,6-bisphosphate + H2O = beta-D-fructose 6-phosphate + phosphate. It catalyses the reaction beta-D-fructose 1,6-bisphosphate = D-glyceraldehyde 3-phosphate + dihydroxyacetone phosphate. It functions in the pathway carbohydrate biosynthesis; gluconeogenesis. Functionally, catalyzes two subsequent steps in gluconeogenesis: the aldol condensation of dihydroxyacetone phosphate (DHAP) and glyceraldehyde-3-phosphate (GA3P) to fructose-1,6-bisphosphate (FBP), and the dephosphorylation of FBP to fructose-6-phosphate (F6P). The polypeptide is Fructose-1,6-bisphosphate aldolase/phosphatase (Sulfurisphaera tokodaii (strain DSM 16993 / JCM 10545 / NBRC 100140 / 7) (Sulfolobus tokodaii)).